Consider the following 596-residue polypeptide: Beta-glucuronidase (596 aa).

Residues Asp-168 and Asn-412 each coordinate D-glucuronate. Catalysis depends on Glu-413, which acts as the Proton donor. The D-glucuronate site is built by Asn-464, Tyr-470, Glu-502, Trp-547, and Lys-566. Residue Glu-502 is the Nucleophile of the active site. An N-K motif motif is present at residues 564–566 (NKK).

The protein belongs to the glycosyl hydrolase 2 family.

It is found in the cytoplasm. The catalysed reaction is a beta-D-glucuronoside + H2O = D-glucuronate + an alcohol. In terms of biological role, displays beta-glucuronidase activity with the artificial substrate p-nitrophenyl-beta-D-glucuronide (PNPG). Is probably involved in the metabolism of oligosaccharides containing the 3-O-beta-D-glucopyranosyl-beta-D-glucuronide structure released from bacterial and plant acidic carbohydrates. In Paenibacillus borealis, this protein is Beta-glucuronidase.